The primary structure comprises 450 residues: Tripartite motif-containing protein 77 (450 aa).

The RING-type zinc finger occupies 15–56 (CSICTDYLTDPVTICCGHRFCSPCLCLLWEDTLTPNCCPVCR). Residues 88 to 131 (SAMLICRRHQEIKNLICETDRSLLCFLCSQSPRHATHKHYMTRE) form a B box-type zinc finger. Residues cysteine 93, histidine 96, cysteine 115, and histidine 121 each coordinate Zn(2+). Positions 269–450 (QLSAWTITGV…LRPFICHGSK (182 aa)) constitute a B30.2/SPRY domain.

It belongs to the TRIM/RBCC family.

This chain is Tripartite motif-containing protein 77 (TRIM77), found in Homo sapiens (Human).